The primary structure comprises 117 residues: Large ribosomal subunit protein bL20c (117 aa).

Belongs to the bacterial ribosomal protein bL20 family.

The protein resides in the plastid. Its subcellular location is the chloroplast. In terms of biological role, binds directly to 23S ribosomal RNA and is necessary for the in vitro assembly process of the 50S ribosomal subunit. It is not involved in the protein synthesizing functions of that subunit. In Arabis hirsuta (Hairy rock-cress), this protein is Large ribosomal subunit protein bL20c.